A 392-amino-acid polypeptide reads, in one-letter code: Adenosine 3'-phospho 5'-phosphosulfate transporter 2 (392 aa).

The interval asparagine 11–serine 35 is disordered. 10 helical membrane passes run cysteine 62–valine 82, proline 87–glutamate 107, leucine 136–leucine 156, proline 159–isoleucine 179, glycine 185–alanine 205, asparagine 212–glycine 232, valine 249–glycine 269, phenylalanine 286–leucine 306, isoleucine 314–phenylalanine 334, and phenylalanine 338–tyrosine 358.

The protein belongs to the nucleotide-sugar transporter family. SLC35B subfamily.

It localises to the golgi apparatus membrane. Functionally, mediates the transport of adenosine 3'-phospho 5'-phosphosulfate (PAPS), from cytosol into Golgi. PAPS is a universal sulfuryl donor for sulfation events that take place in the Golgi. Essential for viability. Involved in glycosaminoglycan synthesis and the subsequent signaling. May be involved in hh and dpp signaling by controlling the sulfation of heparan sulfate (HS). The sequence is that of Adenosine 3'-phospho 5'-phosphosulfate transporter 2 from Drosophila pseudoobscura pseudoobscura (Fruit fly).